The sequence spans 55 residues: Cicadin (55 aa).

Positions 1-26 (NEYHGFVDKANNENKRKKQQGRDDFV) are enriched in basic and acidic residues. A disordered region spans residues 1-39 (NEYHGFVDKANNENKRKKQQGRDDFVVKPNNFANRRRKD).

Functionally, possesses antifungal activity against B.cinerea, M.arachidicola, F.oxysporum, R.solani and C.comatus. Suppresses the activity of HIV-1 reverse transcriptase and stimulates the proliferation of murine splenocytes. This is Cicadin from Cicada flammata.